We begin with the raw amino-acid sequence, 408 residues long: Dicamba O-demethylase 1, ferredoxin reductase component (408 aa).

FAD contacts are provided by glycine 14, lysine 49, valine 82, arginine 130, aspartate 279, and valine 298.

This sequence belongs to the FAD-dependent oxidoreductase family. In terms of assembly, monomer. The dicamba O-demethylase multicomponent enzyme system is composed of an oxygenase component (DdmC) and an electron transfer component formed by a ferredoxin reductase (DdmA1) and a ferredoxin (DdmB). In vitro, dicamba O-demethylase assays in which DdmA2 is substituted for DdmA1 demonstrate that the two enzymes possess nearly identical activities. Requires FAD as cofactor.

It catalyses the reaction 2 reduced [2Fe-2S]-[ferredoxin] + NAD(+) + H(+) = 2 oxidized [2Fe-2S]-[ferredoxin] + NADH. Component of the dicamba O-demethylase multicomponent enzyme system involved in the degradation of the herbicide dicamba. In vitro, catalyzes the transfers of electrons from ferredoxin (DdmB) to NADH. Both NADH and NADPH support enzyme activity, with NADH being markedly more effective than NADPH. In Stenotrophomonas maltophilia (Pseudomonas maltophilia), this protein is Dicamba O-demethylase 1, ferredoxin reductase component.